We begin with the raw amino-acid sequence, 339 residues long: uncharacterized protein (339 aa).

A Rhodanese domain is found at 17-111 (VRGEIKCLDV…WEDLSLPQNE (95 aa)).

This is an uncharacterized protein from Schizosaccharomyces pombe (strain 972 / ATCC 24843) (Fission yeast).